The primary structure comprises 741 residues: Catalase-peroxidase (741 aa).

A signal peptide spans 1 to 23 (MLKKIVTALGMSGMLLASSNAIA). The tryptophyl-tyrosyl-methioninium (Trp-Tyr) (with M-249) cross-link spans 102-223 (WHDAGTYRIY…YAATQMGLIY (122 aa)). Histidine 103 functions as the Proton acceptor in the catalytic mechanism. A cross-link (tryptophyl-tyrosyl-methioninium (Tyr-Met) (with W-102)) is located at residues 223–249 (YVNPEGPDGKPDIKGAASEIRQAFRAM). Residue histidine 264 participates in heme b binding.

It belongs to the peroxidase family. Peroxidase/catalase subfamily. As to quaternary structure, homodimer or homotetramer. The cofactor is heme b. Formation of the three residue Trp-Tyr-Met cross-link is important for the catalase, but not the peroxidase activity of the enzyme.

It carries out the reaction H2O2 + AH2 = A + 2 H2O. The enzyme catalyses 2 H2O2 = O2 + 2 H2O. In terms of biological role, bifunctional enzyme with both catalase and broad-spectrum peroxidase activity. This is Catalase-peroxidase from Francisella tularensis subsp. tularensis (strain WY96-3418).